We begin with the raw amino-acid sequence, 1651 residues long: MKFFIALALLGAALASTHLDRYNSIERNIQESSFRAGREYRYLFNGQLSAGLPVPSTPQGISRLQSQVTLQWTDGNTVRMQLQKTRFATSQQESNSMKMLPFERFEEVERMNREHQELLSMPVEFDYEHGLVREIRFAENDQPWSENIKRAVINMLQVNILKKEKYEGAEKSDNQEPTFSFTNVERTLEGECEVLYTVEEIKKEDEQRWAKSINFDKCTRRPYIHHVQTPVCKDCQQTLEQDKMSSTVLNYNITGTSSSFLINSVELRSQHLFAPISEKHQLVSAFTLNTMELIYAGEKKTEIKQVRNEKTSELVYNQESEWAEQQWAQTGEEKYLRQLPQWTENKVEMIKKMFSLMAKQIEQGEAELEAAHTVARIVKVLRECNEEQLEQIYRHVAEHKDEKIAEQLRSIYFNTLALAGTRVTIQQFVDKVQSRKNIAPLKASVAIKTLVDMRYPSLAIAEDIARLCESDVSSSFPALRQSCWLTYGAIVNGVCGQTPRVFVQKNGVKMCPRDAKQRIVDKLVQQFESASTRYEKVLALKTLANAGLDLSVYPLEKIILNEQHETTIRTQAIESFRRLRTQMPTKIQRVLMPVYLNRQQPQHIRMSALHQIIYTQPEWSVLSQIGNQLRQERNQQVRAFTLSLLRSYANNESPCEQTFSSRVQSLLNNIPFSSQEIDRFESVYGKWSTYSRRHQSGFEANFASLFTTESVLPTEMMASIEGVLSGEWNQYFAQIGFTQKNMEKIIKKLLSNVQEKGLEQIVVRGKRASGSFQPTEFLSNLLEKLRITRRQSSEQDPHAFVYIRHRDMDYAFLPIDADSIPEVVRSMIQGGRLEIGDIERVLAQGIHFSASNAAFLYETVRRVPTPMGLPVQFTSKMPTISSIRGQVTFELEPKNGKSFDGLRLRVQAGPRVASTHVLSLRVICPIAEVGTKFLHQAVLNTPVDTEIRMNWEDKVVIRAIYNTPSEEKRIAMIQSRPVTFTRTVAPDARQYPEPIEMTYMLPAHKQLSQSLDREYPQIRVQGTLNRPTSVRIPQWIVDSNVEVYYKPNVEQYEAIFELNLYNNYKMEKNYEKVYKKHNGRRYLEAEPEYDEEEHREQITKKFEWLQNEKVYQHVAKFEIKPEVVKMEVEAVCNNDFHFCKTQIRGEELKATIQYVYPQTPRTVEELKEQKYRQLVVMGEMNYGENTIHININGQQSQEQKKFVKQIEQAPEHETLLEASRLDQYQTVVEYEFEPKPAQYFARYWNMVQAYLRTQYPWTSRIETREEPSRKNMIRATINVEPRQRLTVNMTIETPMETTVLERVELPFRLPTAQIHYQPRNSRYEQKPVMEKIAHHASKQANCVVKSTKINTFDQVAYRNQFTPCYSVLAKDCGSEKSEPRFVVLMKKINEKKEWKNVKVVYGENEIEMYKTEEGLICRVNGEEIEYQPESEIEKKQYNIIWLNKNTLKFDSDDVTVQFDGVNARIHLSALYRNQQCGLCGHYDNEKETEFYDAENQENTIPKFAKSYLYKDSKCNYEREMFEKEENFQRIEKNQEEEKDQEMNYEESRREQDDEPTEQVAIVERQHEICFTQKPVLRCQNGKSQESKKQKVTSVYCLPSSNSWARRQMREIRREPLAQWPEHKLRNLRDQPQMEERTVRVAVDQKCDKFDY.

Residues 1-15 (MKFFIALALLGAALA) form the signal peptide. The 683-residue stretch at 34-716 (FRAGREYRYL…TTESVLPTEM (683 aa)) folds into the Vitellogenin domain. N-linked (GlcNAc...) asparagine glycans are attached at residues asparagine 252 and asparagine 1288. Positions 1340 to 1515 (ANCVVKSTKI…SYLYKDSKCN (176 aa)) constitute a VWFD domain. 2 cysteine pairs are disulfide-bonded: cysteine 1342–cysteine 1479 and cysteine 1364–cysteine 1514. Positions 1527-1556 (FQRIEKNQEEEKDQEMNYEESRREQDDEPT) are disordered.

In terms of tissue distribution, synthesized in Caenorhabditis only by 32 cells building the intestine of adult hermaphroditic individuals; they are cotranslationally secreted into the body cavity and subsequently taken up by the gonad.

The protein localises to the secreted. In terms of biological role, precursor of the egg-yolk proteins that are sources of nutrients during embryonic development. May play a role in cholesterol uptake. May be involved in thermotolerance. This Caenorhabditis elegans protein is Vitellogenin-6 (vit-6).